The following is a 339-amino-acid chain: Deubiquitinase and deneddylase Dub2 (339 aa).

The helical transmembrane segment at Ile-36–Phe-56 threads the bilayer. Residues His-203, Asp-220, and Cys-282 contribute to the active site.

This sequence belongs to the peptidase C48 family.

The protein resides in the secreted. It is found in the host cell. It localises to the membrane. Effector proteins function to alter host cell physiology and promote bacterial survival in host tissues. This protease possesses deubiquitinating and deneddylating activities. This chain is Deubiquitinase and deneddylase Dub2 (cdu2), found in Chlamydia trachomatis serovar D (strain ATCC VR-885 / DSM 19411 / UW-3/Cx).